A 243-amino-acid polypeptide reads, in one-letter code: CRISPR-associated endoribonuclease Cas6 (243 aa).

This sequence belongs to the CRISPR-associated endoribonuclease Cas6 family. In terms of assembly, part of the Csm effector complex that includes at least Cas10(1), Csm2(3), Csm3(5), Csm4(1); the presence of Csm5 and Cas6 may depend on the processing state of precursor crRNA. Csm with a precursor crRNA does not include Csm5, while Cas6, the enzyme probably involved in pre-crRNA processing, is found associated with a subset of the Csm complex that is probably in the process of pre-crRNA maturation. The Csm complex is elongated and slightly twisted with a maximal length of 215 Angstroms and a diameter of 75-80 Angstroms. It has been modeled to have a central protein filamant of Csm3 subunits along which the dsRNA helix of paired crRNA and target RNA binds. The filament is capped at one end by Cas10 and Csm4 and at the other end by Csm5; ssDNA is thought to bind to the N-terminal HD domain of Cas10.

Its function is as follows. CRISPR (clustered regularly interspaced short palindromic repeat) is an adaptive immune system that provides protection against mobile genetic elements (viruses, transposable elements and conjugative plasmids). CRISPR clusters contain spacers, sequences complementary to antecedent mobile elements, and target invading nucleic acids. CRISPR clusters are transcribed and processed into CRISPR RNA (crRNA). The type III-A Csm effector complex binds crRNA and acts as a crRNA-guided RNase, DNase and cyclic oligoadenylate synthase; binding of target RNA cognate to the crRNA is required for all activities. In a heterologous host this Csm effector complex restricts ssRNA phage MS2, suggesting it may target RNA viruses in vivo. Functionally, csm functions as a non-specific ssDNase. Base-pairing between crRNA and target RNA to form a ternary Csm complex activates a ssDNase activity; target RNA cleavage suppresses the ssDNase, a temporal control that prevents uncontrolled DNA degradation. Viral RNA transcripts probably tether the Csm complex to the viral genome, recruiting Cas10 ssDNA activity which is able to degrade DNA in the transcription bubble, spatially controlling the DNase activity. This protein processes pre-crRNA into individual crRNA units. The sequence is that of CRISPR-associated endoribonuclease Cas6 from Streptococcus thermophilus.